The primary structure comprises 283 residues: Pantothenate synthetase (283 aa).

34-41 is a binding site for ATP; sequence MGALHEGH. Residue H41 is the Proton donor of the active site. Q65 is a binding site for (R)-pantoate. Beta-alanine is bound at residue Q65. 152–155 provides a ligand contact to ATP; sequence GEKD. Q158 serves as a coordination point for (R)-pantoate. 189-192 contacts ATP; that stretch reads MSSR.

It belongs to the pantothenate synthetase family. Homodimer.

It is found in the cytoplasm. It catalyses the reaction (R)-pantoate + beta-alanine + ATP = (R)-pantothenate + AMP + diphosphate + H(+). It functions in the pathway cofactor biosynthesis; (R)-pantothenate biosynthesis; (R)-pantothenate from (R)-pantoate and beta-alanine: step 1/1. Its function is as follows. Catalyzes the condensation of pantoate with beta-alanine in an ATP-dependent reaction via a pantoyl-adenylate intermediate. This is Pantothenate synthetase from Rhodopseudomonas palustris (strain BisA53).